The following is a 1264-amino-acid chain: Valine--tRNA ligase (1264 aa).

An N-acetylserine modification is found at serine 2. In terms of domain architecture, GST C-terminal spans 89-219 (GSRAAVLVQQ…YSGARPLSHQ (131 aa)). Residues 217–296 (SHQPGPEAPA…GEKKDVSGPM (80 aa)) form a disordered region. 2 stretches are compositionally biased toward basic and acidic residues: residues 234 to 248 (LKKE…EKFQ) and 261 to 275 (GEKK…KRDP). Positions 344–354 (PNVTGSLHLGH) match the 'HIGH' region motif. Serine 437 and serine 527 each carry phosphoserine. Lysine 645 bears the N6-acetyllysine mark. The short motif at 862–866 (KMSKS) is the 'KMSKS' region element. Lysine 865 serves as a coordination point for ATP.

This sequence belongs to the class-I aminoacyl-tRNA synthetase family. In terms of assembly, forms high-molecular-mass aggregates with elongation factor 1.

The catalysed reaction is tRNA(Val) + L-valine + ATP = L-valyl-tRNA(Val) + AMP + diphosphate. Its activity is regulated as follows. Can be regulated by protein kinase C-dependent phosphorylation. Functionally, catalyzes the attachment of valine to tRNA(Val). This chain is Valine--tRNA ligase, found in Homo sapiens (Human).